A 118-amino-acid polypeptide reads, in one-letter code: V-type proton ATPase subunit G 2 (118 aa).

Positions 23 to 90 are disordered; that stretch reads ADARKRKARR…VQGMQSSQQR (68 aa). The span at 35–55 shows a compositional bias: basic and acidic residues; the sequence is QAKEEAQMEVEQYRREREQEF. Composition is skewed to polar residues over residues 56–69 and 78–89; these read QSKQ…QGNL and RRQVQGMQSSQQ.

This sequence belongs to the V-ATPase G subunit family. As to quaternary structure, V-ATPase is a heteromultimeric enzyme made up of two complexes: the ATP-hydrolytic V1 complex and the proton translocation V0 complex. The V1 complex consists of three catalytic AB heterodimers that form a heterohexamer, three peripheral stalks each consisting of EG heterodimers, one central rotor including subunits D and F, and the regulatory subunits C and H. The proton translocation complex V0 consists of the proton transport subunit a, a ring of proteolipid subunits c9c'', rotary subunit d, subunits e and f, and the accessory subunits ATP6AP1/Ac45 and ATP6AP2/PRR.

It localises to the melanosome. The protein localises to the cytoplasmic vesicle. The protein resides in the clathrin-coated vesicle membrane. In terms of biological role, subunit of the V1 complex of vacuolar(H+)-ATPase (V-ATPase), a multisubunit enzyme composed of a peripheral complex (V1) that hydrolyzes ATP and a membrane integral complex (V0) that translocates protons. V-ATPase is responsible for acidifying and maintaining the pH of intracellular compartments and in some cell types, is targeted to the plasma membrane, where it is responsible for acidifying the extracellular environment. The sequence is that of V-type proton ATPase subunit G 2 (ATP6V1G2) from Macaca mulatta (Rhesus macaque).